The primary structure comprises 359 residues: Small ribosomal subunit protein uS2 (359 aa).

Residues 232-295 (EPQFKPSEFT…PVGTEPVATT (64 aa)) form a disordered region. 2 stretches are compositionally biased toward basic and acidic residues: residues 239 to 250 (EFTRRDGDENRN) and 257 to 273 (DNRR…DTHY).

This sequence belongs to the universal ribosomal protein uS2 family.

The chain is Small ribosomal subunit protein uS2 (rpsB) from Spiroplasma citri.